A 195-amino-acid chain; its full sequence is Imidazoleglycerol-phosphate dehydratase (195 aa).

This sequence belongs to the imidazoleglycerol-phosphate dehydratase family.

It localises to the cytoplasm. It catalyses the reaction D-erythro-1-(imidazol-4-yl)glycerol 3-phosphate = 3-(imidazol-4-yl)-2-oxopropyl phosphate + H2O. The protein operates within amino-acid biosynthesis; L-histidine biosynthesis; L-histidine from 5-phospho-alpha-D-ribose 1-diphosphate: step 6/9. The sequence is that of Imidazoleglycerol-phosphate dehydratase from Cupriavidus taiwanensis (strain DSM 17343 / BCRC 17206 / CCUG 44338 / CIP 107171 / LMG 19424 / R1) (Ralstonia taiwanensis (strain LMG 19424)).